The following is an 88-amino-acid chain: Large ribosomal subunit protein bL27 (88 aa).

Residues 1 to 21 (MAHKKGASSSRNGRDSAAQRL) form a disordered region.

Belongs to the bacterial ribosomal protein bL27 family.

The chain is Large ribosomal subunit protein bL27 from Mycobacterium avium (strain 104).